We begin with the raw amino-acid sequence, 3969 residues long: Histone-lysine N-methyltransferase 2A (3969 aa).

Disordered stretches follow at residues 1–108 (MAHS…LLRV), 132–253 (VFGE…EDSL), and 301–352 (RRRG…RQSP). The short motif at 6-25 (RWRFPARPGTTGGGGGGGRR) is the Menin-binding motif (MBM) element. Positions 15–29 (TTGGGGGGGRRGLGG) are enriched in gly residues. 2 stretches are compositionally biased toward low complexity: residues 59–69 (AVAAAAAAAGS) and 77–104 (GAAAASAASSSSASSSSSSSSSASSGPA). Residues 123-134 (GTNLRRFRAVFG) carry the Integrase domain-binding motif 1 (IBM1) motif. Phosphoserine; by CK2 is present on residues serine 136 and serine 142. The Integrase domain-binding motif 2 (IBM2) motif lies at 147–152 (QFLGFG). Serine 153 is modified (phosphoserine). Positions 169–180 (KTSPRKPRGRPR) form a DNA-binding region, a.T hook 1. Residue serine 197 is modified to Phosphoserine. 2 stretches are compositionally biased toward basic and acidic residues: residues 202 to 220 (SETKSGDKIKKKDSKSIEK) and 237 to 253 (HGKDISELPKGNKEDSL). The segment at residues 217-227 (SIEKKRGRPPT) is a DNA-binding region (a.T hook 2). Lysine 239 bears the N6-acetyllysine mark. A DNA-binding region (a.T hook 3) is located at residues 301–309 (RRRGRPPST). Basic and acidic residues predominate over residues 323–347 (ELEKPQKVRKDKEGTPPLTKEDKTV). Lysine 373 carries the N6-acetyllysine modification. Positions 445 to 585 (STPNSRFSAP…SSISDHTPWL (141 aa)) are disordered. Over residues 452–491 (SAPSCGSSEKSSAASQHSSQMSSDSSRSSSPSVDTSTDSQ) the composition is skewed to low complexity. At serine 518 the chain carries Phosphoserine. Over residues 546 to 559 (LSTLQSAPQQQTSS) the composition is skewed to low complexity. Residues 560-573 (SPPPPLLTPPPPLQ) are compositionally biased toward pro residues. Lysine 636 is subject to N6-acetyllysine. Residue serine 680 is modified to Phosphoserine. Disordered regions lie at residues 713–780 (ESVT…SSSL), 798–949 (FPSH…TSVT), 1038–1066 (EKSKSLKQTDQPKAQGQESDSSETSVRGP), and 1106–1166 (SSMG…VPED). Over residues 716-732 (TLPSNRTSAGTSSSGVS) the composition is skewed to polar residues. Over residues 762 to 780 (LSSSELSPLTPPSSVSSSL) the composition is skewed to low complexity. Positions 798–808 (FPSHSLTQSGE) are enriched in polar residues. Over residues 820 to 841 (TSAPAEPFSSSSPTPLFPWFTP) the composition is skewed to low complexity. Threonine 840 carries the post-translational modification Phosphothreonine. Residues 846 to 890 (ERGRNKDKAPEELSKDRDADKSVEKDKSRERDREREKENKRESRK) are compositionally biased toward basic and acidic residues. Phosphoserine is present on residues serine 926 and serine 1056. Positions 1043–1062 (LKQTDQPKAQGQESDSSETS) are enriched in polar residues. Residue lysine 1130 is modified to N6-acetyllysine. The segment at 1147-1195 (KKGRRSRRCGQCPGCQVPEDCGVCTNCLDKPKFGGRNIKKQCCKMRKCQ) adopts a CXXC-type zinc-finger fold. 8 residues coordinate Zn(2+): cysteine 1155, cysteine 1158, cysteine 1161, cysteine 1167, cysteine 1170, cysteine 1173, cysteine 1189, and cysteine 1194. A disordered region spans residues 1200-1375 (MPSKAYLQKQ…PPVNKQENAG (176 aa)). Over residues 1220–1232 (SKTSEKKDSKESS) the composition is skewed to basic and acidic residues. The span at 1233-1243 (VVKNVVDSSQK) shows a compositional bias: low complexity. Lysine 1235 carries the post-translational modification N6-acetyllysine. The span at 1248-1273 (AREDPAPKKSSSEPPPRKPVEEKSEE) shows a compositional bias: basic and acidic residues. Polar residues predominate over residues 1284–1300 (KQATTPASRKSSKQVSQ). Pro residues predominate over residues 1304-1313 (VIPPQPPTTG). 3 consecutive PHD-type zinc fingers follow at residues 1431–1482 (RVVC…CKFC), 1479–1533 (CKFC…CVRC), and 1566–1627 (GNFC…CTER). The interaction with histone H3K4me3 stretch occupies residues 1584–1600 (KMMQCGKCDRWVHSKCE). The 131-residue stretch at 1635-1765 (ALEKELQISL…SFFIRQMERV (131 aa)) folds into the Bromo domain. 2 disordered regions span residues 1663–1713 (YRQA…GVKR) and 1806–1869 (QERE…GIED). Over residues 1826–1847 (APKPKGPGEPDSPTPLHPPTPP) the composition is skewed to pro residues. Residue serine 1837 is modified to Phosphoserine. Phosphothreonine is present on threonine 1845. Residue serine 1858 is modified to Phosphoserine. Residues 1870 to 1910 (NRQCALCLTYGDDSANDAGRLLYIGQNEWTHVNCALWSAEV) form a C2HC pre-PHD-type zinc finger. Residues 1931-1978 (LRCEFCQKPGATVGCCLTSCTSNYHFMCSRAKNCVFLDDKKVYCQRHR) form a PHD-type 4 zinc finger. In terms of domain architecture, FYR N-terminal spans 2018–2074 (NIHMMIGSMTIDCLGILNDLSDCEDKLFPIGYQCSRVYWSTTDARKRCVYTCKIVEC). 7 disordered regions span residues 2081 to 2133 (PDIN…TSGS), 2145 to 2232 (IRTP…TTGT), 2275 to 2333 (NKNS…KLAP), 2373 to 2460 (RGQR…EGNL), 2475 to 2618 (GQRP…RYPR), 2647 to 2675 (FYSSSTGKKRGKRSAEGQVDGADDLSTSD), and 2713 to 2821 (KISQ…KNLL). Residues 2095 to 2115 (IAHSPTSFTESSSKESQNTAE) show a composition bias toward polar residues. Serine 2098 bears the Phosphoserine mark. Threonine 2147 carries the post-translational modification Phosphothreonine. Phosphoserine occurs at positions 2151 and 2201. Over residues 2214–2232 (RTGNTYSRNNVSSVSTTGT) the composition is skewed to polar residues. Residues 2283–2302 (SSSSEMKQSSASDLVSKSSS) are compositionally biased toward low complexity. Polar residues-rich tracts occupy residues 2310-2319 (VLSSKSSEGS) and 2406-2421 (GMSNRSSIINEHMGSS). Basic and acidic residues predominate over residues 2432–2442 (SCKETFKEKHS). A Phosphothreonine modification is found at threonine 2525. Lysine 2528 is covalently cross-linked (Glycyl lysine isopeptide (Lys-Gly) (interchain with G-Cter in SUMO2)). Composition is skewed to polar residues over residues 2543-2563 (SPASPLQIESTSPTEPISASE) and 2573-2592 (PSPNNTSCQDSQSNNYQNLP). Position 2611 is a phosphoserine (serine 2611). Residues 2726–2741 (SDTSVTATTRKSSQIP) are compositionally biased toward polar residues. Residues 2744–2782 (NGKENGTENLKIDRPEDAGEKEHVTKSSVGHKNEPKMDN) are compositionally biased toward basic and acidic residues. The segment covering 2784-2795 (HSVSRVKTQGQD) has biased composition (polar residues). Serine 2796 carries the phosphoserine modification. Residues 2796–2805 (SLEAQLSSLE) are compositionally biased toward low complexity. Over residues 2812–2821 (TSTPSDKNLL) the composition is skewed to polar residues. Positions 2847–2855 (SDIMDFVLK) match the 9aaTAD motif. Serine 2955 carries the post-translational modification Phosphoserine. Lysine 2958 carries the N6-acetyllysine modification. Disordered stretches follow at residues 2961-3064 (TITE…NAAV) and 3166-3244 (PAAT…SNIA). Composition is skewed to polar residues over residues 2963–2972 (TEKSVASSES) and 3016–3030 (HGNNQDLTRNSSTPG). Position 3036 is a phosphoserine (serine 3036). The segment covering 3039–3064 (VPIQNQKYVPNSTDSPGPSQISNAAV) has biased composition (polar residues). Residues 3171-3182 (SSFPPNISNPPS) are compositionally biased toward low complexity. A compositionally biased stretch (polar residues) spans 3198-3216 (VSESSQRTDLSTTVATPSS). Residues 3218–3233 (LKKRPISRLQTRKNKK) show a composition bias toward basic residues. Threonine 3372 carries the phosphothreonine modification. Lysine 3462 is subject to N6-acetyllysine. Disordered stretches follow at residues 3464-3608 (GIHS…GQPA) and 3620-3643 (TQNPANEQESAEPKTVEEEESNFS). Polar residues predominate over residues 3476–3489 (SGPQVSNFTQTVDA). Residues 3508–3529 (SPTSPGGSPSSPSSGQRSASPS) are compositionally biased toward low complexity. A phosphoserine mark is found at serine 3511, serine 3515, and serine 3527. Residues 3591–3603 (QDTASVEQSSQKE) show a composition bias toward polar residues. Residues 3666–3747 (KKGLVFEISS…KHCRNYKFRF (82 aa)) form the FYR C-terminal domain. The WDR5 interaction motif (WIN) signature appears at 3762–3767 (GSARAE). The interval 3785-3808 (HRQPPEYNPNDEEEEEVQLKSARR) is disordered. The 117-residue stretch at 3829 to 3945 (EAVGVYRSPI…RGEELTYDYK (117 aa)) folds into the SET domain. Positions 3839 and 3841 each coordinate S-adenosyl-L-methionine. Cysteine 3882 is modified (S-methylcysteine; by autocatalysis). S-adenosyl-L-methionine contacts are provided by residues tyrosine 3883 and 3906–3907 (NH). The Zn(2+) site is built by cysteine 3909 and cysteine 3957. The region spanning 3953–3969 (NKLPCNCGAKKCRKFLN) is the Post-SET domain. Asparagine 3958 is a binding site for S-adenosyl-L-methionine. Zn(2+)-binding residues include cysteine 3959 and cysteine 3964.

This sequence belongs to the class V-like SAM-binding methyltransferase superfamily. Histone-lysine methyltransferase family. TRX/MLL subfamily. In terms of assembly, MLL cleavage product N320 heterodimerizes with MLL cleavage product C180 (via SET and FYRC domains). Component of some MLL1/MLL complex, at least composed of the core components KMT2A/MLL1, ASH2L, HCFC1/HCF1, HCFC2, WDR5, DPY30 and RBBP5, as well as the facultative components BACC1, CHD8, E2F6, HSP70, INO80C, KANSL1, LAS1L, MAX, MCRS1, MEN1, MGA, KAT8/MOF, PELP1, PHF20, PRP31, RING2, RUVB1/TIP49A, RUVB2/TIP49B, SENP3, TAF1, TAF4, TAF6, TAF7, TAF9 and TEX10. Forms a core complex with the evolutionary conserved subcomplex WRAD composed of WDR5, RBBP5, ASH2L/ASH2 and DPY30 subunits; WRAD differentially stimulates the methyltransferase activity. Interacts (via WIN motif) with WDR5; the interaction is direct. Interaction with WDR5 is required for stable interaction with ASH2L and RBBP5, and thereby also for optimal histone methyltransferase activity. Interacts with KAT8/MOF; the interaction is direct. Interacts with SBF1 and PPP1R15A. Interacts with ZNF335. Interacts with CLOCK and BMAL1 in a circadian manner. Interacts with PPIE; this results in decreased histone H3 methyltransferase activity. Interacts with CREBBP. Interacts with the WRAD complex composed of WDR5, RBBP5, ASH2L and DPY30. Interacts (via MBM motif) with MEN1. Interacts (via IBM motifs) with PSIP1 (via IBD domain) with moderate affinity whereas the KMT2A-MEN1 complex interacts with a greater affinity; MEN1 enhances interaction of KMT2A with PSIP1. Phosphorylation increases its affinity for PSIP1. Forms a complex with CREBBP and CREB1. As to quaternary structure, (Microbial infection) Interacts with herpes virus 8/HHV-8 protein LANA1; this interaction regulates the MLL1 histone methyltransferase activity on viral DNA. Post-translationally, proteolytic cleavage by TASP1 generates MLL cleavage product N320 and MLL cleavage product C180, which reassemble through a non-covalent association. 2 cleavage sites exist, cleavage site 1 (CS1) and cleavage site 2 (CS2), to generate MLL cleavage products N320 and C180. CS2 is the major site. Phosphorylation increases its interaction with PSIP1. In terms of processing, auto-methylated at Cys-3882: auto-methylation is inhibited by the WRAD complex and unmodified histone H3. In terms of tissue distribution, heart, lung, brain and T- and B-lymphocytes.

The protein resides in the nucleus. It carries out the reaction L-lysyl(4)-[histone H3] + S-adenosyl-L-methionine = N(6)-methyl-L-lysyl(4)-[histone H3] + S-adenosyl-L-homocysteine + H(+). It catalyses the reaction N(6)-methyl-L-lysyl(4)-[histone H3] + S-adenosyl-L-methionine = N(6),N(6)-dimethyl-L-lysyl(4)-[histone H3] + S-adenosyl-L-homocysteine + H(+). The catalysed reaction is L-cysteinyl-[protein] + S-adenosyl-L-methionine = S-methyl-L-cysteinyl-[protein] + S-adenosyl-L-homocysteine + H(+). Functionally, histone methyltransferase that plays an essential role in early development and hematopoiesis. Catalytic subunit of the MLL1/MLL complex, a multiprotein complex that mediates both methylation of 'Lys-4' of histone H3 (H3K4me) complex and acetylation of 'Lys-16' of histone H4 (H4K16ac). Catalyzes methyl group transfer from S-adenosyl-L-methionine to the epsilon-amino group of 'Lys-4' of histone H3 (H3K4) via a non-processive mechanism. Part of chromatin remodeling machinery predominantly forms H3K4me1 and H3K4me2 methylation marks at active chromatin sites where transcription and DNA repair take place. Has weak methyltransferase activity by itself, and requires other component of the MLL1/MLL complex to obtain full methyltransferase activity. Has no activity toward histone H3 phosphorylated on 'Thr-3', less activity toward H3 dimethylated on 'Arg-8' or 'Lys-9', while it has higher activity toward H3 acetylated on 'Lys-9'. Binds to unmethylated CpG elements in the promoter of target genes and helps maintain them in the nonmethylated state. Required for transcriptional activation of HOXA9. Promotes PPP1R15A-induced apoptosis. Plays a critical role in the control of circadian gene expression and is essential for the transcriptional activation mediated by the CLOCK-BMAL1 heterodimer. Establishes a permissive chromatin state for circadian transcription by mediating a rhythmic methylation of 'Lys-4' of histone H3 (H3K4me) and this histone modification directs the circadian acetylation at H3K9 and H3K14 allowing the recruitment of CLOCK-BMAL1 to chromatin. Also has auto-methylation activity on Cys-3882 in absence of histone H3 substrate. The protein is Histone-lysine N-methyltransferase 2A (KMT2A) of Homo sapiens (Human).